The primary structure comprises 429 residues: Phosphomethylpyrimidine synthase (429 aa).

Substrate is bound by residues Asn-66, Met-95, Tyr-124, His-163, 185–187, 226–229, and Glu-265; these read SRG and DGLR. His-269 contributes to the Zn(2+) binding site. Tyr-292 lines the substrate pocket. A Zn(2+)-binding site is contributed by His-333. [4Fe-4S] cluster is bound by residues Cys-407, Cys-410, and Cys-414.

Belongs to the ThiC family. [4Fe-4S] cluster serves as cofactor.

It catalyses the reaction 5-amino-1-(5-phospho-beta-D-ribosyl)imidazole + S-adenosyl-L-methionine = 4-amino-2-methyl-5-(phosphooxymethyl)pyrimidine + CO + 5'-deoxyadenosine + formate + L-methionine + 3 H(+). It participates in cofactor biosynthesis; thiamine diphosphate biosynthesis. Its function is as follows. Catalyzes the synthesis of the hydroxymethylpyrimidine phosphate (HMP-P) moiety of thiamine from aminoimidazole ribotide (AIR) in a radical S-adenosyl-L-methionine (SAM)-dependent reaction. The chain is Phosphomethylpyrimidine synthase from Pyrococcus abyssi (strain GE5 / Orsay).